The sequence spans 138 residues: Cytosolic calcium-binding protein 2 (138 aa).

Positions 31 to 41 (TEVTQQPEESV) are enriched in low complexity. A disordered region spans residues 31–122 (TEVTQQPEES…KKTEVVEEKQ (92 aa)). 6 tandem repeats follow at residues 62–68 (VEEAEKK), 71–75 (ETEKK), 92–98 (VEEEEKK), 109–114 (VEEEKK), 118–122 (VEEKQ), and 131–135 (VAVEK). Residues 62 to 135 (VEEAEKKDEE…AAAEEVAVEK (74 aa)) form a 6 X 5 AA approximate repeats of V-E-E-K-K region. Basic and acidic residues predominate over residues 64 to 85 (EAEKKDEETEKKTEEKDEKTEV). A compositionally biased stretch (basic and acidic residues) spans 110–122 (EEEKKTEVVEEKQ).

In terms of tissue distribution, predominantly expressed in roots (e.g. in endodermis in the stele) and stems, to a lower extent in shoots, flowers and siliques, and, at low levels, in leaves.

It localises to the cytoplasm. It is found in the cytosol. Functionally, binds calcium Ca(2+) and may act as a signal mediator to buffer Ca(2+). The chain is Cytosolic calcium-binding protein 2 from Arabidopsis thaliana (Mouse-ear cress).